The sequence spans 242 residues: Tryptophan synthase alpha chain (242 aa).

Residues E31 and D42 each act as proton acceptor in the active site.

This sequence belongs to the TrpA family. As to quaternary structure, tetramer of two alpha and two beta chains.

It catalyses the reaction (1S,2R)-1-C-(indol-3-yl)glycerol 3-phosphate + L-serine = D-glyceraldehyde 3-phosphate + L-tryptophan + H2O. It functions in the pathway amino-acid biosynthesis; L-tryptophan biosynthesis; L-tryptophan from chorismate: step 5/5. The alpha subunit is responsible for the aldol cleavage of indoleglycerol phosphate to indole and glyceraldehyde 3-phosphate. The protein is Tryptophan synthase alpha chain of Staphylococcus aureus (strain bovine RF122 / ET3-1).